Here is a 286-residue protein sequence, read N- to C-terminus: Oxidoreductase clz15 (286 aa).

Belongs to the asaB hydroxylase/desaturase family.

The protein operates within secondary metabolite biosynthesis. Its function is as follows. Oxidoreductase; part of the gene cluster that mediates the biosynthesis of squalestatin S1 (SQS1, also known as zaragozic acid A), a heavily oxidized fungal polyketide that offers potent cholesterol lowering activity by targeting squalene synthase (SS). SQS1 is composed of a 2,8-dioxobicyclic[3.2.1]octane-3,4,5-tricarboxyclic acid core that is connected to two lipophilic polyketide arms. These initial steps feature the priming of an unusual benzoic acid starter unit onto the highly reducing polyketide synthase clz14, followed by oxaloacetate extension and product release to generate a tricarboxylic acid containing product. The phenylalanine ammonia lyase (PAL) clz10 and the acyl-CoA ligase clz12 are involved in transforming phenylalanine into benzoyl-CoA. The citrate synthase-like protein clz17 is involved in connecting the C-alpha-carbons of the hexaketide chain and oxaloacetate to afford the tricarboxylic acid unit. The potential hydrolytic enzymes, clz11 and clz13, are in close proximity to pks2 and may participate in product release. On the other side, the tetraketide arm is synthesized by a the squalestatin tetraketide synthase clz2 and enzymatically esterified to the core in the last biosynthetic step, by the acetyltransferase clz6. The biosynthesis of the tetraketide must involve 3 rounds of chain extension. After the first and second rounds methyl-transfer occurs, and in all rounds of extension the ketoreductase and dehydratase are active. The enoyl reductase and C-MeT of clz2 are not active in the final round of extension. The acetyltransferase clz6 appears to have a broad substrate selectivity for its acyl CoA substrate, allowing the in vitro synthesis of novel squalestatins. The biosynthesis of SQS1 requires several oxidative steps likely performed by oxidoreductases clz3, clz15 and clz16. Finally, in support of the identification of the cluster as being responsible for SQS1 production, the cluster contains a gene encoding a putative squalene synthase (SS) clz20, suggesting a likely mechanism for self-resistance. This Cochliobolus lunatus (Filamentous fungus) protein is Oxidoreductase clz15.